A 169-amino-acid chain; its full sequence is S-ribosylhomocysteine lyase (169 aa).

Residues His54, His58, and Cys128 each contribute to the Fe cation site.

Belongs to the LuxS family. As to quaternary structure, homodimer. Fe cation is required as a cofactor.

The catalysed reaction is S-(5-deoxy-D-ribos-5-yl)-L-homocysteine = (S)-4,5-dihydroxypentane-2,3-dione + L-homocysteine. Functionally, involved in the synthesis of autoinducer 2 (AI-2) which is secreted by bacteria and is used to communicate both the cell density and the metabolic potential of the environment. The regulation of gene expression in response to changes in cell density is called quorum sensing. Catalyzes the transformation of S-ribosylhomocysteine (RHC) to homocysteine (HC) and 4,5-dihydroxy-2,3-pentadione (DPD). The chain is S-ribosylhomocysteine lyase from Shewanella halifaxensis (strain HAW-EB4).